The following is a 326-amino-acid chain: Lipopolysaccharide heptosyltransferase 1 (326 aa).

Threonine 187, threonine 188, lysine 192, glutamate 222, and methionine 242 together coordinate ADP. Positions 187, 188, 192, 222, 242, 261, 262, 263, and 266 each coordinate ADP-L-glycero-beta-D-manno-heptose. Residues threonine 262 and glycine 263 each contribute to the ADP site.

It belongs to the glycosyltransferase 9 family. As to quaternary structure, monomer.

The protein resides in the cell inner membrane. The catalysed reaction is an alpha-Kdo-(2-&gt;4)-alpha-Kdo-(2-&gt;6)-lipid A + ADP-L-glycero-beta-D-manno-heptose = an L-alpha-D-Hep-(1-&gt;5)-[alpha-Kdo-(2-&gt;4)]-alpha-Kdo-(2-&gt;6)-lipid A + ADP + H(+). The enzyme catalyses alpha-Kdo-(2-&gt;4)-alpha-Kdo-(2-&gt;6)-lipid A (E. coli) + ADP-L-glycero-beta-D-manno-heptose = L-alpha-D-Hep-(1-&gt;5)-[alpha-Kdo-(2-&gt;4)]-alpha-Kdo-(2-&gt;6)-lipid A (E. coli) + ADP + H(+). It functions in the pathway bacterial outer membrane biogenesis; LPS core biosynthesis. With respect to regulation, inhibited by ADP-L-glycero-beta-D-gluco-2-deoxy-2-fluoro-heptose (ADP-2F-heptose), a non-cleavable analog of the substrate ADP-L-glycero-beta-D-manno-heptose. In terms of biological role, glycosyltransferase involved in the biosynthesis of the core oligosaccharide region of lipopolysaccharide (LPS). Catalyzes the addition of the first heptose unit to one 3-deoxy-D-manno-octulosonic acid (Kdo) residue of the Kdo2-lipid A module. The protein is Lipopolysaccharide heptosyltransferase 1 of Escherichia coli O18:K1:H7 (strain RS218 / NMEC).